A 329-amino-acid polypeptide reads, in one-letter code: Malate dehydrogenase (329 aa).

12 to 18 (GAAGQIG) contributes to the NAD(+) binding site. Arginine 95 and arginine 101 together coordinate substrate. NAD(+)-binding positions include asparagine 108, glutamine 115, and 132 to 134 (VGN). Residues asparagine 134 and arginine 165 each contribute to the substrate site. Histidine 190 serves as the catalytic Proton acceptor.

The protein belongs to the LDH/MDH superfamily. MDH type 2 family.

It carries out the reaction (S)-malate + NAD(+) = oxaloacetate + NADH + H(+). Its function is as follows. Catalyzes the reversible oxidation of malate to oxaloacetate. The chain is Malate dehydrogenase from Bordetella petrii (strain ATCC BAA-461 / DSM 12804 / CCUG 43448).